A 95-amino-acid polypeptide reads, in one-letter code: Aspartyl/glutamyl-tRNA(Asn/Gln) amidotransferase subunit C (95 aa).

It belongs to the GatC family. Heterotrimer of A, B and C subunits.

The enzyme catalyses L-glutamyl-tRNA(Gln) + L-glutamine + ATP + H2O = L-glutaminyl-tRNA(Gln) + L-glutamate + ADP + phosphate + H(+). It catalyses the reaction L-aspartyl-tRNA(Asn) + L-glutamine + ATP + H2O = L-asparaginyl-tRNA(Asn) + L-glutamate + ADP + phosphate + 2 H(+). In terms of biological role, allows the formation of correctly charged Asn-tRNA(Asn) or Gln-tRNA(Gln) through the transamidation of misacylated Asp-tRNA(Asn) or Glu-tRNA(Gln) in organisms which lack either or both of asparaginyl-tRNA or glutaminyl-tRNA synthetases. The reaction takes place in the presence of glutamine and ATP through an activated phospho-Asp-tRNA(Asn) or phospho-Glu-tRNA(Gln). The polypeptide is Aspartyl/glutamyl-tRNA(Asn/Gln) amidotransferase subunit C (Pelagibacter ubique (strain HTCC1062)).